The sequence spans 579 residues: Adenine deaminase (579 aa).

The protein belongs to the metallo-dependent hydrolases superfamily. Adenine deaminase family. Mn(2+) is required as a cofactor.

The catalysed reaction is adenine + H2O + H(+) = hypoxanthine + NH4(+). This chain is Adenine deaminase, found in Listeria monocytogenes serotype 4b (strain F2365).